The following is a 603-amino-acid chain: Matrix metalloproteinase-17 (603 aa).

An N-terminal signal peptide occupies residues 1-35 (MRRRAARGPGPPPPGPGLSRLPLPLLLLLALGTRG). Residues 36–125 (GCAAPAPAPR…PVLTQARRRR (90 aa)) constitute a propeptide that is removed on maturation. The Cysteine switch motif lies at 108–115 (PRCSLPDL). Cys110 is a binding site for Zn(2+). A glycan (N-linked (GlcNAc...) asparagine) is linked at Asn137. Residue His248 participates in Zn(2+) binding. The active site involves Glu249. Zn(2+) contacts are provided by His252 and His258. The segment at 301–329 (SPTAQPEEPPLLPEPPDNRSSAPPRKDVP) is disordered. Asn318 carries N-linked (GlcNAc...) asparagine glycosylation. Residues Cys332 and Cys523 are joined by a disulfide bond. Hemopexin repeat units follow at residues 333 to 378 (STHF…WRGL), 382 to 427 (LDSV…FSLP), 428 to 475 (PGGI…WRGV), and 476 to 523 (PSTL…WLVC). The interval 537 to 571 (DAAEGPRAPPGQHDQSRSEDGYEVCSCTSGASSPP) is disordered. Ser565 is lipidated: GPI-anchor amidated serine. Residues 566 to 603 (GASSPPGAPGPLVAATMLLLLPPLSPGALWTAAQALTL) constitute a propeptide, removed in mature form.

It belongs to the peptidase M10A family. Zn(2+) is required as a cofactor. It depends on Ca(2+) as a cofactor. The precursor is cleaved by a furin endopeptidase. As to expression, expressed in brain, leukocytes, colon, ovary testis and breast cancer. Expressed also in many transformed and non-transformed cell types.

The protein resides in the cell membrane. Its subcellular location is the secreted. It is found in the extracellular space. The protein localises to the extracellular matrix. In terms of biological role, endopeptidase that degrades various components of the extracellular matrix, such as fibrin. May be involved in the activation of membrane-bound precursors of growth factors or inflammatory mediators, such as tumor necrosis factor-alpha. May also be involved in tumoral process. Cleaves pro-TNF-alpha at the '74-Ala-|-Gln-75' site. Not obvious if able to proteolytically activate progelatinase A. Does not hydrolyze collagen types I, II, III, IV and V, gelatin, fibronectin, laminin, decorin nor alpha1-antitrypsin. The sequence is that of Matrix metalloproteinase-17 (MMP17) from Homo sapiens (Human).